Here is a 301-residue protein sequence, read N- to C-terminus: MVFVKSTKSNAYFKRYQVKFRRRRDGKTDYRARIRLINQDKNKYNTPKYRFVVRFTNKDIVAQIVSASIAGDIVKASAYAHELPQYGLTVGLTNYAAAYCTGLLLARRVLKMLEMDDEYEGNVEATGEDFSVEPTDSRRPFRALLDVGLIRTTTGNRVFGALKGALDGGLDIPHSDKRFAGFHKENKQLDAEIHRNYIYGGHVSNYMKLLGEDEPEKLQTHFSAYIKKGVEAESIEELYKKVHAAIRADPNPKKTVKPAPKQHKRYNLKKLTYEERKNKLIERVKALNGAGGDDDDEDDEE.

The protein belongs to the universal ribosomal protein uL18 family. In terms of assembly, component of the large ribosomal subunit (LSU). In terms of tissue distribution, expressed in seedlings, roots, stems, leaves, inflorescences and siliques.

It is found in the cytoplasm. The protein localises to the nucleus. The protein resides in the nucleolus. It localises to the nucleoplasm. Component of the ribosome, a large ribonucleoprotein complex responsible for the synthesis of proteins in the cell. The small ribosomal subunit (SSU) binds messenger RNAs (mRNAs) and translates the encoded message by selecting cognate aminoacyl-transfer RNA (tRNA) molecules. The large subunit (LSU) contains the ribosomal catalytic site termed the peptidyl transferase center (PTC), which catalyzes the formation of peptide bonds, thereby polymerizing the amino acids delivered by tRNAs into a polypeptide chain. The nascent polypeptides leave the ribosome through a tunnel in the LSU and interact with protein factors that function in enzymatic processing, targeting, and the membrane insertion of nascent chains at the exit of the ribosomal tunnel. Seems involved in the regulation of cell proliferation. Essential in leaf polarity establishment, probably having a role for translation in leaf dorsoventral patterning to specify leaf adaxial identity. The chain is Large ribosomal subunit protein uL18z from Arabidopsis thaliana (Mouse-ear cress).